A 314-amino-acid polypeptide reads, in one-letter code: MTSVIFMGTPEFSVPVLEGLIEAGYEIRAVVTQPDKKVGRKQKIAKTPAKIAAEKHDLPVLQPVKLSGSEEMNQLIDMHADLIVTAAYGQFLPTKFLKSVNIAAVNVHGSLLPKYRGGAPIQYSLINGDKETGITIMEMVKKMDAGDIYAQEAIKIEPEDNAGTLFSKLSILGRDLLLKTLPSIIDGSVKKTPQDPDKVVFSPNITKEQERLSIDMTAEQANNMIRALNPDPGAYLMINGQRFKVWEAEVASDSSSLEAGTVVANKGRFAISFADNTVLNLLEVQPSGKKRMNIKNFLNGQGSKFVTGEEIVDK.

110–113 (SLLP) contacts (6S)-5,6,7,8-tetrahydrofolate.

This sequence belongs to the Fmt family.

The catalysed reaction is L-methionyl-tRNA(fMet) + (6R)-10-formyltetrahydrofolate = N-formyl-L-methionyl-tRNA(fMet) + (6S)-5,6,7,8-tetrahydrofolate + H(+). Attaches a formyl group to the free amino group of methionyl-tRNA(fMet). The formyl group appears to play a dual role in the initiator identity of N-formylmethionyl-tRNA by promoting its recognition by IF2 and preventing the misappropriation of this tRNA by the elongation apparatus. This chain is Methionyl-tRNA formyltransferase, found in Lactobacillus acidophilus (strain ATCC 700396 / NCK56 / N2 / NCFM).